Here is a 528-residue protein sequence, read N- to C-terminus: Calcium-dependent protein kinase 4 (528 aa).

Over residues 1 to 16 (MGQEMSTQSDMQNENQ) the composition is skewed to polar residues. Positions 1 to 36 (MGQEMSTQSDMQNENQKGNKRNLKGSQGKNGLKERS) are disordered. Residue G2 is the site of N-myristoyl glycine attachment. The Protein kinase domain occupies 70–328 (YKGIKILGKG…ARDALEHEWI (259 aa)). Residues 76–84 (LGKGSFGEV) and K99 contribute to the ATP site. The active-site Proton acceptor is D193. The J domain autoinhibitory motif motif lies at 350-358 (NIKQFQSTQ). The tract at residues 350-386 (NIKQFQSTQKLAQAALLYMGSKLTTIDETKELTKIFK) is j domain. The short motif at 359–368 (KLAQAALLYM) is the J domain EF-hand interaction motif element. EF-hand domains are found at residues 376–411 (DETK…LLKL), 423–458 (AIEV…RKLL), 459–494 (LSTE…GDVS), and 498–528 (WKTV…LCNY). Ca(2+)-binding residues include D389, N391, D393, Q395, E400, D436, D438, N440, Y442, E447, D472, D474, S476, K478, E483, D506, N508, D510, E512, and E517.

It belongs to the protein kinase superfamily. Ser/Thr protein kinase family. CDPK subfamily. As to quaternary structure, may interact with the pre-replication MCM complex prior male gametogenesis activation. Requires Mg(2+) as cofactor. Post-translationally, myristoylated; myristoylation may target it to different subcellular compartments. During male gametogenesis, myristoylation is required to initiate DNA replication but not for mitotic spindle assembly or axoneme activation. Not palmitoylated. In terms of processing, may be autophosphorylated on Thr-234 in vitro.

Its subcellular location is the cytoplasm. The protein resides in the membrane. It localises to the chromosome. It carries out the reaction L-seryl-[protein] + ATP = O-phospho-L-seryl-[protein] + ADP + H(+). The enzyme catalyses L-threonyl-[protein] + ATP = O-phospho-L-threonyl-[protein] + ADP + H(+). Activated by calcium. Upon calcium binding to the EF-hand domains, the C-terminus of the junction domain (J domain) undergoes a conformational change which results in the dissociation of the pseudo-substrate inhibitory motif from the catalytic domain. This, in turn, may facilitate the autophosphorylation of the activation loop at Thr-234, which leads to the kinase activation. Intracellular calcium increase is triggered by xanthurenic acid (XA), a small mosquito molecule that induces the differentiation of specialized transmission stages, the gametocytes, into male and female gametes. Activated by a decrease in temperature (20 degrees Celsius) and an increase in pH (7.6) occurring when the parasite is ingested by in the mosquito. Functionally, calcium-dependent protein kinase which acts as a sensor and effector of intracellular Ca(2+) levels probably in part downstream of cGMP-activated PKG kinase. Plays a central role in the host erythrocytes and hepatocytes infection cycles, sexual reproduction and mosquito transmission of the parasite. During the liver stage, involved in sporozoite motility and thus in sporozoite invasion of host hepatocytes, probably together with CDPK1 and CDPK5. Involved in merosome egress from host hepatocytes, probably together with CDPK5. During the asexual blood stage, involved in merozoite invasion of host erythrocytes and motility by stabilizing the inner membrane complex, a structure below the plasma membrane which acts as an anchor for the glidosome, an acto-myosin motor. Required for cell cycle progression in the male gametocyte. During male gametogenesis in the mosquito gut, required to initiate the first round of DNA replication, probably by facilitating the assembly of the pre-replicative MCM complex, to assemble the first mitotic spindle and, at the end of gametogenesis, to initiate axoneme motility, cytokinesis and subsequent exflagellation. For each of these steps, may phosphorylate SOC1, SOC2 and SOC3, respectively. Together with CDPK1, regulates ookinete gliding in the mosquito host midgut. During male gametogenesis in the mosquito gut, required to initiate the first round of DNA replication, probably by facilitating the assembly of the pre-replicative MCM complex, and to assemble the first mitotic spindle. Its function is as follows. At the end of male gametogenesis in the mosquito gut, required to initiate axoneme motility, cytokinesis and subsequent exflagellation. The chain is Calcium-dependent protein kinase 4 from Plasmodium berghei (strain Anka).